The following is a 627-amino-acid chain: (-)-alpha-pinene synthase 2, chloroplastic (627 aa).

The N-terminal 36 residues, 1–36, are a transit peptide targeting the chloroplast; sequence MALVSIAPLASKSCLHKSLSSSAHELKTICRTIPTL. The Mg(2+) site is built by aspartate 378, aspartate 382, and aspartate 530. The DDXXD motif signature appears at 378-382; that stretch reads DDMYD.

The protein belongs to the terpene synthase family. Tpsd subfamily. Mg(2+) serves as cofactor. Requires Mn(2+) as cofactor.

Its subcellular location is the plastid. The protein localises to the chloroplast. The enzyme catalyses (2E)-geranyl diphosphate = (1S,5S)-beta-pinene + diphosphate. It catalyses the reaction (2E)-geranyl diphosphate = (1S,5S)-alpha-pinene + diphosphate. The protein operates within terpene metabolism; oleoresin biosynthesis. Functionally, terpene synthase (TPS) involved in the biosynthesis of monoterpene natural products included in conifer oleoresin secretions and volatile emissions; these compounds contribute to biotic and abiotic stress defense against herbivores and pathogens. Catalyzes the conversion of (2E)-geranyl diphosphate (GPP) to (1S,5S)-beta-pinene. The protein is (-)-alpha-pinene synthase 2, chloroplastic of Picea glauca (White spruce).